The primary structure comprises 115 residues: U3-lycotoxin-Ls1k (115 aa).

A signal peptide spans 1–20; sequence MKFVLLFGVLLVALFSYSSA. Residues 21–44 constitute a propeptide that is removed on maturation; the sequence is EMLDDFGQADEDELLSLIEKEEAR. 4 disulfide bridges follow: cysteine 48–cysteine 63, cysteine 55–cysteine 72, cysteine 62–cysteine 87, and cysteine 74–cysteine 85.

Belongs to the neurotoxin 19 (CSTX) family. 01 subfamily. Expressed by the venom gland.

It is found in the secreted. In Lycosa singoriensis (Wolf spider), this protein is U3-lycotoxin-Ls1k.